Consider the following 251-residue polypeptide: D-aminoacyl-tRNA deacylase (251 aa).

This sequence belongs to the DtdA deacylase family. In terms of assembly, monomer. Zn(2+) serves as cofactor.

The enzyme catalyses a D-aminoacyl-tRNA + H2O = a tRNA + a D-alpha-amino acid + H(+). It catalyses the reaction glycyl-tRNA(Ala) + H2O = tRNA(Ala) + glycine + H(+). D-aminoacyl-tRNA deacylase with broad substrate specificity. By recycling D-aminoacyl-tRNA to D-amino acids and free tRNA molecules, this enzyme counteracts the toxicity associated with the formation of D-aminoacyl-tRNA entities in vivo. The protein is D-aminoacyl-tRNA deacylase of Pyrobaculum aerophilum (strain ATCC 51768 / DSM 7523 / JCM 9630 / CIP 104966 / NBRC 100827 / IM2).